Consider the following 753-residue polypeptide: MTIINHTLGFPRVGLRRELKKAQESYWAGNATREELLTVGRELRARHWEQQKQAGVDLLPVGDFAWYDHVLTTSLLLGNVPARHQNKDGSIDIDTLFRIGRGRAPTGEPAAAAEMTKWFNTNYHYMVPEFVKGQQFKLTWTQLLDEVDEALALGHKIKPVLLGPVTYLWLGKVKGEPFDRLSLLNDILPVYQQVLAELAKRGIEWVQIDEPALVLELPPAWLEAFKPAYDALQGQVKLLLTTYFEGISDNLATIAALPVQGLHVDLVHGKDDVAELHNRLPADWLLSAGLINGRNVWRADLTEKYAQIKDLVGKRDLWVASSCSLLHSPIDLSVETRLDAEVKSWFAFALQKCGELALLRDALNSGDTAAITEWSAPIQARRHSTRVHNAEVEKRLAAITAQDSQRASPYEVRAQAQRQRFNLPKWPTTTIGSFPQTTEIRGLRLDFKKGNLDASHYRTGIAEHIKQAIVEQERLGLDVLVHGEAERNDMVEYFGEHLDGFIFTQNGWVQSYGSRCVKPPVVIGDVSRPQAITVDWAKYAQSLTDKPVKGMLTGPVTILCWSFPREDVSRETIAKQIALALRDEVADLEAAGIGIIQIDEPALREGLPLKRSDWDAYLQWGVEAFRLNAAVAKDDTQIHTHMCYCEFNDIMDSIAALDADVITIETSRSDMELLESFEAFEYPNEIGPGVYDIHSPNVPSVEWIEALLAKAAQRIPAERLWVNPDCGLKTRGWPETRAALANMVQAAQNLRQA.

Residues Arg17–Lys20 and Lys117 each bind 5-methyltetrahydropteroyltri-L-glutamate. L-homocysteine contacts are provided by residues Ile431–Ser433 and Glu484. L-methionine-binding positions include Ile431 to Ser433 and Glu484. 5-methyltetrahydropteroyltri-L-glutamate-binding positions include Arg515–Cys516 and Trp561. Residue Asp599 coordinates L-homocysteine. L-methionine is bound at residue Asp599. Position 605 (Glu605) interacts with 5-methyltetrahydropteroyltri-L-glutamate. The Zn(2+) site is built by His641, Cys643, and Glu665. His694 acts as the Proton donor in catalysis. Residue Cys726 coordinates Zn(2+).

It belongs to the vitamin-B12 independent methionine synthase family. The cofactor is Zn(2+).

It carries out the reaction 5-methyltetrahydropteroyltri-L-glutamate + L-homocysteine = tetrahydropteroyltri-L-glutamate + L-methionine. It participates in amino-acid biosynthesis; L-methionine biosynthesis via de novo pathway; L-methionine from L-homocysteine (MetE route): step 1/1. Its function is as follows. Catalyzes the transfer of a methyl group from 5-methyltetrahydrofolate to homocysteine resulting in methionine formation. In Klebsiella pneumoniae (strain 342), this protein is 5-methyltetrahydropteroyltriglutamate--homocysteine methyltransferase.